Consider the following 543-residue polypeptide: MGVETSSAWQALQLHSDSGMGSIHLSKLFQDTNRQDDYSLELSDVYVDFSKNRITQETVQLLIELAEQQKLPKEIHRLMTGEHVNDTEDRPALHTALRALGKDVSGGAETVQPEIEQVLQKMELMTKKIRSGHWRGYSGKPITDVVNIGVGGSDLGPLMITHSLQTISSPINLHFISSIDGTQTSNLLRGLKQETTLFILASKSFTTIDTLSNAETAKDWLKECISDERVIFSQHFIGVSTKPDKMQEWGIPPENQLMFWDWVGGRYSLWSAIGFPIALKIGMDGFRELLQGAHEMDQHFATADLKKNIPVILALIDIWNINFLNIHDKAILPYDARLRYLPAYLEQLVMESNGKSVARSGESVPYKTCPVLWGEVGPNAQHAFYQLLHQGTQAVMCDFIAPVERDDFDANSHTERDESLRHQHELALANCFAQSRVLMLGDNAIPSDLKASFDSPFKHYPGNQPSNTILIKTISAKTLGMLVAMYEHKTYVESVIWEINPFDQWGVELGKLIAKETYNAIKDKPLADSFDSSTKGLIDRVVK.

The Proton donor role is filled by glutamate 351. Active-site residues include histidine 382 and lysine 511.

This sequence belongs to the GPI family.

Its subcellular location is the cytoplasm. The enzyme catalyses alpha-D-glucose 6-phosphate = beta-D-fructose 6-phosphate. The protein operates within carbohydrate biosynthesis; gluconeogenesis. It participates in carbohydrate degradation; glycolysis; D-glyceraldehyde 3-phosphate and glycerone phosphate from D-glucose: step 2/4. Functionally, catalyzes the reversible isomerization of glucose-6-phosphate to fructose-6-phosphate. The protein is Glucose-6-phosphate isomerase of Hydrogenovibrio crunogenus (strain DSM 25203 / XCL-2) (Thiomicrospira crunogena).